Here is a 237-residue protein sequence, read N- to C-terminus: Immunoglobulin superfamily member 6 (237 aa).

Residues 1–27 (MGPVSARRSRLRPEISLILFQVGMVGA) form the signal peptide. Residues 28–152 (CTVYVLQPGY…ERLFSKEVRS (125 aa)) are Extracellular-facing. Positions 30 to 134 (VYVLQPGYLE…ELSPSAKHVG (105 aa)) constitute an Ig-like C2-type domain. The cysteines at positions 51 and 118 are disulfide-linked. The chain crosses the membrane as a helical span at residues 153–173 (FLIVLLALLSVYITGVCVTFI). Topologically, residues 174 to 237 (VLFKSKSNGP…RKALPNPGRA (64 aa)) are cytoplasmic. Residues 215 to 229 (TSHLPEQEGTDENRK) are compositionally biased toward basic and acidic residues. Residues 215-237 (TSHLPEQEGTDENRKALPNPGRA) form a disordered region.

Ubiquitous with higher expression in immune tissue.

It localises to the membrane. The polypeptide is Immunoglobulin superfamily member 6 (Igsf6) (Mus musculus (Mouse)).